Reading from the N-terminus, the 221-residue chain is Spore wall protein 3 (221 aa).

The signal sequence occupies residues 1-20 (MVRRSLYFLAVMGVVRSSSG). Residues 150–203 (ENPASTGSSSTSTCPPKGTAGTTDNKGKAGGAAADDKSKSSSSSSSKKKKKGAK) form a disordered region. Residues 154 to 173 (STGSSSTSTCPPKGTAGTTD) show a composition bias toward low complexity. The GPI-anchor amidated serine moiety is linked to residue Ser192. Positions 193 to 221 (SSSKKKKKGAKSLVALGAVATTALFSIVM) are cleaved as a propeptide — removed in mature form.

It localises to the spore wall. The protein localises to the membrane. The protein resides in the cytoplasm. Spore wall component. The sequence is that of Spore wall protein 3 (SWP3) from Encephalitozoon cuniculi (strain GB-M1) (Microsporidian parasite).